The sequence spans 354 residues: Opsin-1, short-wave-sensitive 2 (354 aa).

Over 1–43 the chain is Extracellular; it reads MKQQQQTPELFEDFHMPITLDVSNISAYSPFLVPQDHLGHSGV. Asn-24 carries an N-linked (GlcNAc...) asparagine glycan. Residues 44 to 68 form a helical membrane-spanning segment; sequence FMGMSAFMLFLFIAGTAINVLTIVC. Residues 69 to 80 lie on the Cytoplasmic side of the membrane; that stretch reads TIQYKKLRSHLN. The chain crosses the membrane as a helical span at residues 81–106; sequence YILVNLAISNLWVSVFGSSVAFYAFY. At 107 to 120 the chain is on the extracellular side; it reads KKYFVFGPIGCKIE. Cys-117 and Cys-194 form a disulfide bridge. A helical transmembrane segment spans residues 121–140; sequence GFTSTIGGMVSLWSLAVVAL. Residues 141 to 159 are Cytoplasmic-facing; the sequence is ERWLVICKPLGNFTFKTPH. The chain crosses the membrane as a helical span at residues 160–183; that stretch reads AIAGCILPWCMALAAGLPPLLGWS. The Extracellular segment spans residues 184–209; that stretch reads RYIPEGLQCSCGPDWYTTNNKFNNES. Asn-207 carries an N-linked (GlcNAc...) asparagine glycan. The chain crosses the membrane as a helical span at residues 210 to 237; it reads YVMFLFCFCFAVPFSTIVFCYGQLLITL. At 238 to 259 the chain is on the cytoplasmic side; sequence KLAAKAQADSASTQKAEREVTK. The chain crosses the membrane as a helical span at residues 260–283; it reads MVVVMVFGFLICWGPYAIFAIWVV. Residues 284-291 are Extracellular-facing; sequence SNRGAPFD. The chain crosses the membrane as a helical span at residues 292-316; that stretch reads LRLATIPSCLCKASTVYNPVIYVLM. Lys-303 carries the N6-(retinylidene)lysine modification. The Cytoplasmic segment spans residues 317–354; that stretch reads NKQFRSCMMKMVFNKNIEEDEASSSSQVTQVSSVAPEK.

It belongs to the G-protein coupled receptor 1 family. Opsin subfamily. In terms of processing, phosphorylated on some or all of the serine and threonine residues present in the C-terminal region. In terms of tissue distribution, retinal long single cone outer segments.

It is found in the membrane. Visual pigments are the light-absorbing molecules that mediate vision. They consist of an apoprotein, opsin, covalently linked to cis-retinal. This is Opsin-1, short-wave-sensitive 2 (opn1sw2) from Danio rerio (Zebrafish).